Reading from the N-terminus, the 179-residue chain is Large ribosomal subunit protein uL5 (179 aa).

The protein belongs to the universal ribosomal protein uL5 family. In terms of assembly, part of the 50S ribosomal subunit; part of the 5S rRNA/L5/L18/L25 subcomplex. Contacts the 5S rRNA and the P site tRNA. Forms a bridge to the 30S subunit in the 70S ribosome.

Functionally, this is one of the proteins that bind and probably mediate the attachment of the 5S RNA into the large ribosomal subunit, where it forms part of the central protuberance. In the 70S ribosome it contacts protein S13 of the 30S subunit (bridge B1b), connecting the 2 subunits; this bridge is implicated in subunit movement. Contacts the P site tRNA; the 5S rRNA and some of its associated proteins might help stabilize positioning of ribosome-bound tRNAs. In Francisella tularensis subsp. novicida (strain U112), this protein is Large ribosomal subunit protein uL5.